The sequence spans 813 residues: MATGDSLEDIKIEIDDDLEKIPIEEVFKKLRCSREGLSGAEGKERLKIFGPNKLENKKKEHITLRFFALMFKPLSWVIQAAAIMAMLFANGDGRQLFLGIVCLLIVNTIICYLKEDDAANVVAMARAGLSPKTKVLRDGKWSEQEASILVPGDIVSIKPGDIIPCDARLLEGDTLKVDQSALTGEFGPITKGPGEEVFSGTTCKQGEMEAVVIATGVHTFSGTTAHLVDNRTNKVGHFRKVVTEIENLCVISIAIGISIEVIVMYWIQRRNFSDVINNLLVLVIGGIPLAMPTVLYVIMVTGSLRLYRTGTITQRITAIEDMAAIDVLCSDKTGTLTLNKLSVDKNLIKVYSKDVEKEQVLLLAARASRIENRDGIDAAMVGSLADPKEARAGIREVHFNLVDKRTALTYIDGNGDWHRVSKGTPEQILDLCNARDDLRKSVHSAIRNYAERGLKSFAISWFRNTNCNTVFFFPYQLCSEHKYHIVNKLQERHICGLIGDGVDDVPSLKKADVGIAVANATEAARAASDIVLTEPGLSVIIDAVLASRAILQQMKHYTIYAVSITIRVVFGFMFIALIWKFDFSPFMVLAIALLNEETTKAITMDNVTNPSPTPDSLKLKEIFATGVVYGSYMALITVVFFWAAYRTDIFPRTFHVRDLRGNEAEMMCALYLQVSIMSQALFFVIQSRSWFFVERPGELLFLSFVTVQTIATTLAVYASWETARIEGIGWSWAGVIWLYNIIFFFPLDIMKFGIRYILTGKAQSLFDNMVHLVLNSYAKLSNGIYNHTQADHTYSLLEVSTPPSQDLRGVGWV.

Residues 1 to 66 are Cytoplasmic-facing; sequence MATGDSLEDI…KKKEHITLRF (66 aa). The chain crosses the membrane as a helical span at residues 67 to 86; it reads FALMFKPLSWVIQAAAIMAM. The Extracellular portion of the chain corresponds to 87–94; that stretch reads LFANGDGR. The helical transmembrane segment at 95-115 threads the bilayer; the sequence is QLFLGIVCLLIVNTIICYLKE. Residues 116-245 are Cytoplasmic-facing; it reads DDAANVVAMA…GHFRKVVTEI (130 aa). Residues 246-266 form a helical membrane-spanning segment; it reads ENLCVISIAIGISIEVIVMYW. Over 267-275 the chain is Extracellular; the sequence is IQRRNFSDV. A helical membrane pass occupies residues 276 to 293; that stretch reads INNLLVLVIGGIPLAMPT. Residues 294 to 555 lie on the Cytoplasmic side of the membrane; that stretch reads VLYVIMVTGS…ASRAILQQMK (262 aa). Asp331 functions as the 4-aspartylphosphate intermediate in the catalytic mechanism. 2 residues coordinate Mg(2+): Asp500 and Asp504. Residues 556 to 577 traverse the membrane as a helical segment; that stretch reads HYTIYAVSITIRVVFGFMFIAL. The Extracellular segment spans residues 578–582; that stretch reads IWKFD. Residues 583 to 605 traverse the membrane as a helical segment; it reads FSPFMVLAIALLNEETTKAITMD. The Cytoplasmic portion of the chain corresponds to 606–622; sequence NVTNPSPTPDSLKLKEI. The chain crosses the membrane as a helical span at residues 623–643; sequence FATGVVYGSYMALITVVFFWA. The Extracellular portion of the chain corresponds to 644-664; sequence AYRTDIFPRTFHVRDLRGNEA. Residues 665–685 traverse the membrane as a helical segment; it reads EMMCALYLQVSIMSQALFFVI. At 686-697 the chain is on the cytoplasmic side; that stretch reads QSRSWFFVERPG. A helical membrane pass occupies residues 698–718; sequence ELLFLSFVTVQTIATTLAVYA. At 719 to 726 the chain is on the extracellular side; it reads SWETARIE. A helical transmembrane segment spans residues 727–747; the sequence is GIGWSWAGVIWLYNIIFFFPL. Over 748-813 the chain is Cytoplasmic; it reads DIMKFGIRYI…SQDLRGVGWV (66 aa). At Ser776 the chain carries Phosphoserine.

The protein belongs to the cation transport ATPase (P-type) (TC 3.A.3) family. Type IIIA subfamily.

The protein localises to the membrane. This chain is Putative ATPase, plasma membrane-like, found in Arabidopsis thaliana (Mouse-ear cress).